The following is a 222-amino-acid chain: UPF0128 protein TK2294 (222 aa).

Belongs to the UPF0128 family.

This Thermococcus kodakarensis (strain ATCC BAA-918 / JCM 12380 / KOD1) (Pyrococcus kodakaraensis (strain KOD1)) protein is UPF0128 protein TK2294.